A 378-amino-acid polypeptide reads, in one-letter code: 8-demethyl-8-alpha-L-rhamnosyl tetracenomycin-C 2'-O-methyltransferase (378 aa).

S-adenosyl-L-methionine contacts are provided by residues 195-201 (EIGVGGY), Ser-210, Asp-227, 245-246 (DQ), and Asp-268. Residue Asp-268 coordinates Mg(2+). His-271 (proton acceptor) is an active-site residue. The Mg(2+) site is built by Glu-296 and Asp-297.

The protein belongs to the methyltransferase OleY/MycE family. Mg(2+) serves as cofactor.

It catalyses the reaction 8-demethyl-8-alpha-L-rhamnosyl-tetracenomycin C + S-adenosyl-L-methionine = 8-demethyl-8-(2-O-methyl-alpha-L-rhamnosyl)-tetracenomycin C + S-adenosyl-L-homocysteine + H(+). It participates in antibiotic biosynthesis. Functionally, O-methyltransferase involved in the biosynthesis of the permethylated L-rhamnose moiety of elloramycin, an antitumor polyketide. Mediates the methylation of the hydroxy groups at the 2'-position after the sugar moiety has been attached to the aglycon. In Streptomyces olivaceus, this protein is 8-demethyl-8-alpha-L-rhamnosyl tetracenomycin-C 2'-O-methyltransferase.